Consider the following 702-residue polypeptide: Polyribonucleotide nucleotidyltransferase (702 aa).

D487 and D493 together coordinate Mg(2+). The 60-residue stretch at 554-613 (PRLLTIKIHPDKIREVIGKGGSTIQAITKETGTQIDIQDDGTIVIASVNAIAAQAAKARI) folds into the KH domain. The 69-residue stretch at 623-691 (GRIYEGKVAK…KQGRIRLSMK (69 aa)) folds into the S1 motif domain.

The protein belongs to the polyribonucleotide nucleotidyltransferase family. As to quaternary structure, component of the RNA degradosome, which is a multiprotein complex involved in RNA processing and mRNA degradation. The cofactor is Mg(2+).

The protein resides in the cytoplasm. It catalyses the reaction RNA(n+1) + phosphate = RNA(n) + a ribonucleoside 5'-diphosphate. Functionally, involved in mRNA degradation. Catalyzes the phosphorolysis of single-stranded polyribonucleotides processively in the 3'- to 5'-direction. This Stenotrophomonas maltophilia (strain R551-3) protein is Polyribonucleotide nucleotidyltransferase.